The sequence spans 125 residues: Small ribosomal subunit protein uS13 (125 aa).

The disordered stretch occupies residues 91 to 125; it reads HRRSLPVRGQNTQTNARTRKGKRKTVAGKKKAARK. A compositionally biased stretch (basic residues) spans 107-125; sequence RTRKGKRKTVAGKKKAARK.

It belongs to the universal ribosomal protein uS13 family. As to quaternary structure, part of the 30S ribosomal subunit. Forms a loose heterodimer with protein S19. Forms two bridges to the 50S subunit in the 70S ribosome.

Located at the top of the head of the 30S subunit, it contacts several helices of the 16S rRNA. In the 70S ribosome it contacts the 23S rRNA (bridge B1a) and protein L5 of the 50S subunit (bridge B1b), connecting the 2 subunits; these bridges are implicated in subunit movement. Contacts the tRNAs in the A and P-sites. This chain is Small ribosomal subunit protein uS13, found in Chlorobium phaeovibrioides (strain DSM 265 / 1930) (Prosthecochloris vibrioformis (strain DSM 265)).